The chain runs to 2359 residues: Nonribosomal peptide synthetase anaPS (2359 aa).

The segment at 239 to 633 (RNATVHGDTL…VRRKDNQVKI (395 aa)) is adenylation 1. Residues 770–846 (AAQGKGEEAI…ELASAANLSN (77 aa)) form the Carrier 1 domain. Residue Ser807 is modified to O-(pantetheine 4'-phosphoryl)serine. A condensation 1 region spans residues 883–1292 (EDIYPSTALQ…VGDLPRMSRQ (410 aa)). The adenylation 2 stretch occupies residues 1321-1709 (LEYPNACAVS…GRKDSQIKIR (389 aa)). In terms of domain architecture, Carrier 2 spans 1842 to 1918 (APSNSVEQDL…AIANKIGVVS (77 aa)). Ser1879 carries the O-(pantetheine 4'-phosphoryl)serine modification. Residues 1936 to 2356 (LTPIQEFFFE…LVKCLEDLAS (421 aa)) are condensation 2.

This sequence belongs to the NRP synthetase family.

It carries out the reaction anthranilate + L-tryptophan + 2 ATP = (R)-benzodiazepinedione + 2 AMP + 2 diphosphate + H(+). The protein operates within alkaloid biosynthesis. Functionally, nonribosomal peptide synthetase; part of the gene cluster that mediates the biosynthesis of the prenylated pyrroloindoline diketopiperazine acetylaszonalenin. The first step in the pathway is the formation of (R)-benzodiazepinedione by condensation of tryptophan and anthranilic acid catalyzed by the non-ribosomal peptide synthetase anaPS. The prenyltransferase anaPT then converts (R)-benzodiazepinedione to aszonalenin in the presence of dimethylallyl diphosphate (DMAPP) via C3-prenylation. The last step in the biosynthesis of acetylaszonalenin via acetylation of aszonalenin at position N1 catalyzed by anaAT. The polypeptide is Nonribosomal peptide synthetase anaPS (Neosartorya fischeri (strain ATCC 1020 / DSM 3700 / CBS 544.65 / FGSC A1164 / JCM 1740 / NRRL 181 / WB 181) (Aspergillus fischerianus)).